A 124-amino-acid polypeptide reads, in one-letter code: Small ribosomal subunit protein uS12 (124 aa).

The segment at 1-32 (MPTIQQLVRKGRKDKATKTKTPALKGSPQRRG) is disordered. A 3-methylthioaspartic acid modification is found at D89. The disordered stretch occupies residues 105-124 (QGVRGRQQARSRYGAKKEKK). Residues 111–124 (QQARSRYGAKKEKK) show a composition bias toward basic residues.

It belongs to the universal ribosomal protein uS12 family. As to quaternary structure, part of the 30S ribosomal subunit. Contacts proteins S8 and S17. May interact with IF1 in the 30S initiation complex.

In terms of biological role, with S4 and S5 plays an important role in translational accuracy. Interacts with and stabilizes bases of the 16S rRNA that are involved in tRNA selection in the A site and with the mRNA backbone. Located at the interface of the 30S and 50S subunits, it traverses the body of the 30S subunit contacting proteins on the other side and probably holding the rRNA structure together. The combined cluster of proteins S8, S12 and S17 appears to hold together the shoulder and platform of the 30S subunit. The chain is Small ribosomal subunit protein uS12 from Beutenbergia cavernae (strain ATCC BAA-8 / DSM 12333 / CCUG 43141 / JCM 11478 / NBRC 16432 / NCIMB 13614 / HKI 0122).